A 73-amino-acid polypeptide reads, in one-letter code: Translation initiation factor IF-1 (73 aa).

An S1-like domain is found at 1–73; the sequence is MAKKDGVIEI…NRGRIVYRYR (73 aa).

It belongs to the IF-1 family. In terms of assembly, component of the 30S ribosomal translation pre-initiation complex which assembles on the 30S ribosome in the order IF-2 and IF-3, IF-1 and N-formylmethionyl-tRNA(fMet); mRNA recruitment can occur at any time during PIC assembly.

The protein resides in the cytoplasm. In terms of biological role, one of the essential components for the initiation of protein synthesis. Stabilizes the binding of IF-2 and IF-3 on the 30S subunit to which N-formylmethionyl-tRNA(fMet) subsequently binds. Helps modulate mRNA selection, yielding the 30S pre-initiation complex (PIC). Upon addition of the 50S ribosomal subunit IF-1, IF-2 and IF-3 are released leaving the mature 70S translation initiation complex. In Acidothermus cellulolyticus (strain ATCC 43068 / DSM 8971 / 11B), this protein is Translation initiation factor IF-1.